A 681-amino-acid chain; its full sequence is DNA-directed RNA polymerase subunit beta' (681 aa).

The Zn(2+) site is built by Cys-69, Cys-71, Cys-87, and Cys-90. The Mg(2+) site is built by Asp-490, Asp-492, and Asp-494.

It belongs to the RNA polymerase beta' chain family. RpoC1 subfamily. In plastids the minimal PEP RNA polymerase catalytic core is composed of four subunits: alpha, beta, beta', and beta''. When a (nuclear-encoded) sigma factor is associated with the core the holoenzyme is formed, which can initiate transcription. The cofactor is Mg(2+). Zn(2+) serves as cofactor.

It localises to the plastid. Its subcellular location is the chloroplast. The catalysed reaction is RNA(n) + a ribonucleoside 5'-triphosphate = RNA(n+1) + diphosphate. Functionally, DNA-dependent RNA polymerase catalyzes the transcription of DNA into RNA using the four ribonucleoside triphosphates as substrates. This is DNA-directed RNA polymerase subunit beta' from Liriodendron tulipifera (Tuliptree).